A 353-amino-acid chain; its full sequence is Melatonin receptor type 1A (353 aa).

Residues 1–32 (MKGNVSELLNATQQAPGGGEGGRPRPSWLAST) are Extracellular-facing. 2 N-linked (GlcNAc...) asparagine glycosylation sites follow: Asn-4 and Asn-10. A helical transmembrane segment spans residues 33–53 (LAFILIFTIVVDILGNLLVIL). Residues 54–66 (SVYRNKKLRNSGN) lie on the Cytoplasmic side of the membrane. A helical transmembrane segment spans residues 67-87 (IFVVSLAVADLVVAVYPYPLV). The Extracellular segment spans residues 88–105 (LTSILNNGWNLGYLHCQV). The cysteines at positions 103 and 180 are disulfide-linked. The helical transmembrane segment at 106-126 (SAFLMGLSVIGSIFNITGIAM) threads the bilayer. At 127–145 (NRYCYICHSLKYDKIYSNK) the chain is on the cytoplasmic side. Residues 146 to 166 (NSLCYVFLIWMLTLIAIMPNL) form a helical membrane-spanning segment. At 167 to 190 (QTGTLQYDPRIYSCTFTQSVSSAY) the chain is on the extracellular side. The helical transmembrane segment at 191-211 (TIAVVVFHFIVPMIIVIFCYL) threads the bilayer. Topologically, residues 212-243 (RIWVLVLQVRRRVKPDNKPKLKPQDFRNFVTM) are cytoplasmic. The helical transmembrane segment at 244–264 (FVVFVLFAICWAPLNLIGLIV) threads the bilayer. The Extracellular portion of the chain corresponds to 265-277 (ASDPATMVPRIPE). Residues 278 to 298 (WLFVASYYLAYFNSCLNAIIY) form a helical membrane-spanning segment. Residues 299-353 (GLLNQNFRKEYKKIIVSLCTAKMFFVESSNEEADKIKCKPSPLIPNNNLIKVDSV) lie on the Cytoplasmic side of the membrane.

This sequence belongs to the G-protein coupled receptor 1 family.

Its subcellular location is the cell membrane. Functionally, high affinity receptor for melatonin. Likely to mediate the reproductive and circadian actions of melatonin. The activity of this receptor is mediated by pertussis toxin sensitive G proteins that inhibit adenylate cyclase activity. Possibly involved in sleep induction, by melatonin activation of the potassium channel KCNMA1/BK and the dissociation of G-beta and G-gamma subunits, thereby decreasing synaptic transmission. This Mus musculus (Mouse) protein is Melatonin receptor type 1A (Mtnr1a).